The sequence spans 405 residues: Probable dual specificity protein kinase YAK1 homolog (405 aa).

The 296-residue stretch at 40–335 folds into the Protein kinase domain; sequence YMIIDMLGTG…AKSLASHSYL (296 aa). Residues 46 to 54 and Lys-68 each bind ATP; that span reads LGTGTFGQV. Catalysis depends on Asp-163, which acts as the Proton acceptor.

The protein belongs to the protein kinase superfamily. CMGC Ser/Thr protein kinase family. MNB/DYRK subfamily.

The protein localises to the cytoplasm. It is found in the nucleus. It catalyses the reaction L-seryl-[protein] + ATP = O-phospho-L-seryl-[protein] + ADP + H(+). The catalysed reaction is L-threonyl-[protein] + ATP = O-phospho-L-threonyl-[protein] + ADP + H(+). It carries out the reaction L-tyrosyl-[protein] + ATP = O-phospho-L-tyrosyl-[protein] + ADP + H(+). Its function is as follows. Negative regulator of the cell cycle acting downstream of the cAMP-dependent protein kinase. Part of a glucose-sensing system involved in growth control in response to glucose availability. The chain is Probable dual specificity protein kinase YAK1 homolog (YAK1) from Encephalitozoon cuniculi (strain GB-M1) (Microsporidian parasite).